The chain runs to 176 residues: MMFTKLFQQWSFAVFLLSYSVPSYGRSVEGISRRLKRAVSEHQLLHDKGKSIQDLRRRIFLQNLIEGVNTAEIRATSEVSPNPKPATNTKNYPVRFGSEDEGRYLTQETNKSQTYKEQPLKVSGKKKKAKPGKRKEQEKKKRRARSAWLNSGMYGSNVTESPVLDNSVTTHNHILR.

The first 25 residues, 1-25 (MMFTKLFQQWSFAVFLLSYSVPSYG), serve as a signal peptide directing secretion. Residues 26–37 (RSVEGISRRLKR) constitute a propeptide that is removed on maturation. The interval 58–69 (RIFLQNLIEGVN) is important for receptor binding. The disordered stretch occupies residues 76-157 (TSEVSPNPKP…WLNSGMYGSN (82 aa)). 2 stretches are compositionally biased toward polar residues: residues 77–91 (SEVS…NTKN) and 106–116 (TQETNKSQTYK). A Nuclear localization signal motif is present at residues 109–130 (TNKSQTYKEQPLKVSGKKKKAK). The segment covering 123–133 (SGKKKKAKPGK) has biased composition (basic residues).

Belongs to the parathyroid hormone family.

It localises to the secreted. Its subcellular location is the cytoplasm. The protein localises to the nucleus. Its function is as follows. Neuroendocrine peptide which is a critical regulator of cellular and organ growth, development, migration, differentiation and survival and of epithelial calcium ion transport. Acts by binding to its receptor, PTH1R, activating G protein-coupled receptor signaling. Regulates endochondral bone development and epithelial-mesenchymal interactions during the formation of the mammary glands and teeth. Required for skeletal homeostasis. In terms of biological role, potent inhibitor of osteoclastic bone resorption. In Gallus gallus (Chicken), this protein is Parathyroid hormone-related protein (PTHLH).